Reading from the N-terminus, the 65-residue chain is Large ribosomal subunit protein bL35 (65 aa).

The segment at 1–46 is disordered; that stretch reads MPKIKTNRGAAKRFKPTGSGGFKRAQSHRRHILTKKSTKRKRHLRS. Residues 25-45 are compositionally biased toward basic residues; the sequence is AQSHRRHILTKKSTKRKRHLR.

It belongs to the bacterial ribosomal protein bL35 family.

This Thioalkalivibrio sulfidiphilus (strain HL-EbGR7) protein is Large ribosomal subunit protein bL35.